Consider the following 521-residue polypeptide: Proactivator polypeptide-like 1 (521 aa).

The first 17 residues, 1–17 (MLCALLLLPSLLGATRA), serve as a signal peptide directing secretion. Residues 18 to 59 (SPTSGPQECAKGSTVWCQDLQTAARCGAVGYCQGAVWNKPTA) constitute a propeptide that is removed on maturation. Positions 19-59 (PTSGPQECAKGSTVWCQDLQTAARCGAVGYCQGAVWNKPTA) constitute a Saposin A-type 1 domain. Saposin B-type domains lie at 60–144 (KSLP…EPLQ) and 180–258 (EGAL…EELG). 3 disulfide bridges follow: cysteine 64/cysteine 140, cysteine 67/cysteine 134, and cysteine 95/cysteine 107. Positions 146-180 (HLATLRPLSKEDTFEAVAPFMANGPLTFHPRQAPE) are excised as a propeptide. Disulfide bonds link cysteine 184–cysteine 254, cysteine 187–cysteine 248, and cysteine 213–cysteine 224. N-linked (GlcNAc...) asparagine glycosylation occurs at asparagine 201. The propeptide occupies 259-288 (APARLTQVVAMDGVPSLELGLPRKQSEMQM). Saposin B-type domains lie at 290 to 370 (AGVT…GNRR) and 392 to 473 (QGSF…HGPR). Cystine bridges form between cysteine 294–cysteine 366, cysteine 297–cysteine 360, and cysteine 325–cysteine 336. A glycan (N-linked (GlcNAc...) asparagine) is linked at asparagine 311. Residues 370 to 391 (RRARAVHDAYAIVPSPEWDAEN) constitute a propeptide that is removed on maturation. Intrachain disulfides connect cysteine 396–cysteine 469, cysteine 399–cysteine 463, and cysteine 427–cysteine 438. The propeptide occupies 474-521 (TPLLGTDQCALGPSFWCRSQEAAKLCNAVQHCQKHVWKEMHLHAGEHA). The Saposin A-type 2 domain maps to 475 to 515 (PLLGTDQCALGPSFWCRSQEAAKLCNAVQHCQKHVWKEMHL).

It localises to the secreted. In terms of biological role, may activate the lysosomal degradation of sphingolipids. This Homo sapiens (Human) protein is Proactivator polypeptide-like 1 (PSAPL1).